We begin with the raw amino-acid sequence, 434 residues long: Putative neutral sphingomyelinase (434 aa).

E83 serves as a coordination point for Mg(2+). H318 (proton acceptor) is an active-site residue. 2 helical membrane passes run I366 to F388 and F392 to L414.

Belongs to the neutral sphingomyelinase family.

The protein localises to the membrane. The catalysed reaction is an N-(acyl)-sphingosylphosphocholine + H2O = an N-acyl-sphingoid base + phosphocholine + H(+). It carries out the reaction a sphingomyelin + H2O = phosphocholine + an N-acylsphing-4-enine + H(+). The enzyme catalyses an N-acyl-15-methylhexadecasphing-4-enine-1-phosphocholine + H2O = an N-acyl-15-methylhexadecasphing-4-enine + phosphocholine + H(+). The protein operates within lipid metabolism; sphingolipid metabolism. Its function is as follows. Catalyzes the hydrolysis of sphingomyelin producing a ceramide (N-acyl-sphingoid base) and a phosphocholine. C.elegans contain specific sphingoid bases, which are unique or different in structure compared to the sphingoid bases found in other animals. Two examples of these distinctive compounds are: 15-methylhexadecasphinganine and 15-methylhexadecasphing-4-enine. In Caenorhabditis elegans, this protein is Putative neutral sphingomyelinase.